The primary structure comprises 186 residues: Ribosome-recycling factor (186 aa).

Belongs to the RRF family.

It is found in the cytoplasm. Functionally, responsible for the release of ribosomes from messenger RNA at the termination of protein biosynthesis. May increase the efficiency of translation by recycling ribosomes from one round of translation to another. In Rickettsia felis (strain ATCC VR-1525 / URRWXCal2) (Rickettsia azadi), this protein is Ribosome-recycling factor.